Consider the following 108-residue polypeptide: Large ribosomal subunit protein uL24 (108 aa).

Residues 46–65 form a disordered region; the sequence is RHTRVQQSSRGSQSGGIVTQ. Residues 51–61 are compositionally biased toward low complexity; it reads QQSSRGSQSGG.

Belongs to the universal ribosomal protein uL24 family. Part of the 50S ribosomal subunit.

Functionally, one of two assembly initiator proteins, it binds directly to the 5'-end of the 23S rRNA, where it nucleates assembly of the 50S subunit. Its function is as follows. One of the proteins that surrounds the polypeptide exit tunnel on the outside of the subunit. The protein is Large ribosomal subunit protein uL24 of Parafrankia sp. (strain EAN1pec).